Here is a 282-residue protein sequence, read N- to C-terminus: Phosphoglucan phosphatase LSF2, chloroplastic (282 aa).

Residues 1–61 (MSVIGSKSCI…GENPGTNGVS (61 aa)) constitute a chloroplast transit peptide. Residues Tyr-83, 153–156 (RHMR), Asp-161, and 177–180 (SLEW) contribute to the substrate site. The Tyrosine-protein phosphatase domain occupies 92–249 (NYTLIRDELI…TYDLAKNDPW (158 aa)). Cys-193 serves as the catalytic Phosphocysteine intermediate. A Glucan phosphatase signature motif CXAGXGR motif is present at residues 193-199 (CSAGLGR). Substrate contacts are provided by residues 194-199 (SAGLGR), Gly-230, Lys-245, Glu-251, 259-263 (NAFED), and Glu-268.

Widely expressed.

It localises to the plastid. The protein resides in the chloroplast. Its function is as follows. Starch-associated phosphoglucan phosphatase that selectively dephosphorylates the glucan C3 position. Probably participates in the regulation of starch degradation. In Arabidopsis thaliana (Mouse-ear cress), this protein is Phosphoglucan phosphatase LSF2, chloroplastic (LSF2).